Consider the following 167-residue polypeptide: Urease accessory protein UreE (167 aa).

The disordered stretch occupies residues 135–167 (SGAYGGGHHHSHSHHEGDEFHSKPRLHHFGGSQ). Residues 157-167 (KPRLHHFGGSQ) show a composition bias toward basic residues.

The protein belongs to the UreE family.

It localises to the cytoplasm. Involved in urease metallocenter assembly. Binds nickel. Probably functions as a nickel donor during metallocenter assembly. The protein is Urease accessory protein UreE of Nitrosococcus oceani (strain ATCC 19707 / BCRC 17464 / JCM 30415 / NCIMB 11848 / C-107).